We begin with the raw amino-acid sequence, 412 residues long: Candidapepsin-2 (412 aa).

The or 18, or 21 signal peptide spans 1–25 (MTTIAIFTKNVLLAIAFALFAQGAA). The propeptide at 26-61 (IPDPAKRDDNPGFVALDFEVTRKPLDVNATSELSKR) is activation peptide. An N-linked (GlcNAc...) asparagine glycan is attached at Asn-53. The region spanning 75–383 (YGIRVSVGSN…LDKETVLSRS (309 aa)) is the Peptidase A1 domain. Residue Asp-93 is part of the active site. The cysteines at positions 108 and 113 are disulfide-linked. Residue Asp-273 is part of the active site. A disulfide bridge links Cys-311 with Cys-345.

It belongs to the peptidase A1 family. O-glycosylated.

Its subcellular location is the secreted. It catalyses the reaction Preferential cleavage at the carboxyl of hydrophobic amino acids, but fails to cleave 15-Leu-|-Tyr-16, 16-Tyr-|-Leu-17 and 24-Phe-|-Phe-25 of insulin B chain. Activates trypsinogen, and degrades keratin.. The chain is Candidapepsin-2 (SAPP2) from Candida parapsilosis (Yeast).